We begin with the raw amino-acid sequence, 565 residues long: NAD-dependent malic enzyme (565 aa).

Tyr-104 serves as the catalytic Proton donor. Residue Arg-157 participates in NAD(+) binding. Lys-175 serves as the catalytic Proton acceptor. The a divalent metal cation site is built by Glu-246, Asp-247, and Asp-270. Residues Asp-270 and Asn-418 each contribute to the NAD(+) site.

The protein belongs to the malic enzymes family. Homotetramer. Mg(2+) is required as a cofactor. Mn(2+) serves as cofactor.

The catalysed reaction is (S)-malate + NAD(+) = pyruvate + CO2 + NADH. The enzyme catalyses oxaloacetate + H(+) = pyruvate + CO2. In Sodalis glossinidius (strain morsitans), this protein is NAD-dependent malic enzyme.